A 301-amino-acid chain; its full sequence is Amine sulfotransferase (301 aa).

46 to 51 (KSGTVW) contributes to the 3'-phosphoadenylyl sulfate binding site. The Proton acceptor role is filled by His-101. 3'-phosphoadenylyl sulfate contacts are provided by residues Arg-123, Ser-131, Tyr-186, 220-225 (ATFENM), and 252-254 (RKG).

Belongs to the sulfotransferase 1 family. As to expression, expressed in male liver.

Its subcellular location is the cytoplasm. It catalyses the reaction a primary amine + 3'-phosphoadenylyl sulfate = a sulfamate + adenosine 3',5'-bisphosphate + 2 H(+). Functionally, sulfotransferase that utilizes 3'-phospho-5'-adenylyl sulfate (PAPS) as sulfonate donor to catalyze the N-sulfonation of amines (PTHP, aniline, 4-chloroaniline, 2-naphthylamine). In Oryctolagus cuniculus (Rabbit), this protein is Amine sulfotransferase (SULT3A1).